The following is a 113-amino-acid chain: MNIMEIEKTNRMNALFEFYAALLTDKQMNYIELYYADDYSLAEIADEFGVSRQAVYDNIKRTEKILETYEMKLHMYSDYVVRSEIFDDMIAHYPHDEYLQEKISILTSIDNRE.

Belongs to the UPF0122 family.

In terms of biological role, might take part in the signal recognition particle (SRP) pathway. This is inferred from the conservation of its genetic proximity to ftsY/ffh. May be a regulatory protein. The protein is UPF0122 protein MGAS10270_Spy1030 of Streptococcus pyogenes serotype M2 (strain MGAS10270).